The following is a 295-amino-acid chain: Shikimate dehydrogenase (NADP(+)) (295 aa).

Residues 18–20 (SRS) and Thr-66 each bind shikimate. The active-site Proton acceptor is Lys-70. Shikimate is bound by residues Asn-91 and Asp-106. Residues 130-134 (GNGGA) and Met-235 each bind NADP(+). Tyr-237 lines the shikimate pocket. NADP(+) is bound at residue Gly-258.

This sequence belongs to the shikimate dehydrogenase family. In terms of assembly, homodimer.

It carries out the reaction shikimate + NADP(+) = 3-dehydroshikimate + NADPH + H(+). It participates in metabolic intermediate biosynthesis; chorismate biosynthesis; chorismate from D-erythrose 4-phosphate and phosphoenolpyruvate: step 4/7. Its function is as follows. Involved in the biosynthesis of the chorismate, which leads to the biosynthesis of aromatic amino acids. Catalyzes the reversible NADPH linked reduction of 3-dehydroshikimate (DHSA) to yield shikimate (SA). The polypeptide is Shikimate dehydrogenase (NADP(+)) (Chlorobium phaeobacteroides (strain DSM 266 / SMG 266 / 2430)).